The sequence spans 765 residues: Probable dipeptidyl peptidase 4 (765 aa).

Residues 1–14 (MKWSILLLVGCAAA) form the signal peptide. Residues asparagine 35, asparagine 78, asparagine 101, asparagine 110, asparagine 169, asparagine 218, asparagine 465, and asparagine 490 are each glycosylated (N-linked (GlcNAc...) asparagine). Serine 613 functions as the Charge relay system in the catalytic mechanism. Asparagine 665 carries an N-linked (GlcNAc...) asparagine glycan. Catalysis depends on charge relay system residues aspartate 690 and histidine 725.

It belongs to the peptidase S9B family.

It is found in the secreted. It catalyses the reaction Release of an N-terminal dipeptide, Xaa-Yaa-|-Zaa-, from a polypeptide, preferentially when Yaa is Pro, provided Zaa is neither Pro nor hydroxyproline.. In terms of biological role, extracellular dipeptidyl-peptidase which removes N-terminal dipeptides sequentially from polypeptides having unsubstituted N-termini provided that the penultimate residue is proline. Contributes to pathogenicity. The sequence is that of Probable dipeptidyl peptidase 4 (dpp4) from Aspergillus fumigatus (strain CBS 144.89 / FGSC A1163 / CEA10) (Neosartorya fumigata).